The sequence spans 115 residues: NADH-ubiquinone oxidoreductase chain 3 (115 aa).

Helical transmembrane passes span 4-24 (MLIL…AFWL), 55-75 (FFLV…LLPL), and 86-106 (MLMT…AYEW).

This sequence belongs to the complex I subunit 3 family. In terms of assembly, core subunit of respiratory chain NADH dehydrogenase (Complex I) which is composed of 45 different subunits. Interacts with TMEM186. Interacts with TMEM242.

Its subcellular location is the mitochondrion inner membrane. It catalyses the reaction a ubiquinone + NADH + 5 H(+)(in) = a ubiquinol + NAD(+) + 4 H(+)(out). In terms of biological role, core subunit of the mitochondrial membrane respiratory chain NADH dehydrogenase (Complex I) which catalyzes electron transfer from NADH through the respiratory chain, using ubiquinone as an electron acceptor. Essential for the catalytic activity of complex I. In Microtus pennsylvanicus (Meadow vole), this protein is NADH-ubiquinone oxidoreductase chain 3.